A 372-amino-acid chain; its full sequence is MKVSVLAAVAAFAAATAIAGPVRPAGVGNDKYLIELAPGKTQWVTKNEKHQMKAAGQTFIDITDEFGTGFTASQPVSANYPKNSRHSSIVAPIIANLSKENLMRDLKAMIEFNNRYYESQTGVESATWLMEQVQKAIDASGIQGAKVEKFENQFQQFSIIATIPGSESTVVIGAHQDSINEQDPEGGRAPGADDNGSGSVVVLEALRGVLGSKALQAANNTNTMEFHWYAGEEGGLLGSNAIFKKYKSDGRQIKAMLNQDLAGFVKKGGPEQFGLITDNTNQELNQFCKMIVKKYASIPIVDTKCGYACSDHASADRSGFPASMVAETAFRDSNPHIHSADDVTDYLDFDHMLEHAKVAVGFMTELAMASNL.

A signal peptide spans 1–19 (MKVSVLAAVAAFAAATAIA). Asn96 is a glycosylation site (N-linked (GlcNAc...) asparagine). His175 and Asp194 together coordinate Zn(2+). 2 N-linked (GlcNAc...) asparagine glycosylation sites follow: Asn195 and Asn219. Residues Glu233 and Asp260 each coordinate Zn(2+). Residues Cys305 and Cys309 are joined by a disulfide bond. His338 is a Zn(2+) binding site.

The protein belongs to the peptidase M28 family. M28E subfamily. In terms of assembly, monomer. Zn(2+) serves as cofactor.

It is found in the secreted. Functionally, probable extracellular aminopeptidase which contributes to pathogenicity. The chain is Probable leucine aminopeptidase MCYG_08380 from Arthroderma otae (strain ATCC MYA-4605 / CBS 113480) (Microsporum canis).